Consider the following 178-residue polypeptide: MDETVYQIKAIIVLDNNGKRLCSCFYDPPGTPITPLTEKDKFEKLIFEKCKTSNCELEIIDNKVVIGSKQSDVWIFVVGNSLNSNELALLDVLNTLISLFKKACATDESIMITKKTFLENYALIRLYIDEIVSDGIIFEVDEETILNRVPIADNAAQSLNEAIEMAKEKAKGFGFGFL.

Belongs to the adaptor complexes small subunit family. Oligomeric complex that consists of at least the alpha, beta, beta', gamma, delta, epsilon and zeta subunits.

It localises to the cytoplasm. It is found in the golgi apparatus membrane. The protein localises to the cytoplasmic vesicle. The protein resides in the COPI-coated vesicle membrane. In terms of biological role, the coatomer is a cytosolic protein complex that binds to dilysine motifs and reversibly associates with Golgi non-clathrin-coated vesicles, which further mediate biosynthetic protein transport from the ER, via the Golgi up to the trans Golgi network. Coatomer complex is required for budding from Golgi membranes, and is essential for the retrograde Golgi-to-ER transport of dilysine-tagged proteins. The zeta subunit may be involved in regulating the coat assembly and, hence, the rate of biosynthetic protein transport due to its association-dissociation properties with the coatomer complex. The sequence is that of Probable coatomer subunit zeta-B (copZb) from Dictyostelium discoideum (Social amoeba).